The primary structure comprises 701 residues: Polyribonucleotide nucleotidyltransferase (701 aa).

Asp487 and Asp493 together coordinate Mg(2+). Residues 554–613 (PTMLQMKIDSDKIRDVIGKGGATIRGICEETKASIDIEDDGSVKIYGETKEAAEAAKLRV) form the KH domain. Residues 623 to 691 (GKIYVGKVER…NRGRIKLSIK (69 aa)) form the S1 motif domain.

This sequence belongs to the polyribonucleotide nucleotidyltransferase family. Component of the RNA degradosome, which is a multiprotein complex involved in RNA processing and mRNA degradation. Mg(2+) is required as a cofactor.

The protein resides in the cytoplasm. The catalysed reaction is RNA(n+1) + phosphate = RNA(n) + a ribonucleoside 5'-diphosphate. Involved in mRNA degradation. Catalyzes the phosphorolysis of single-stranded polyribonucleotides processively in the 3'- to 5'-direction. This is Polyribonucleotide nucleotidyltransferase from Pseudomonas aeruginosa (strain LESB58).